The chain runs to 154 residues: Putative pre-16S rRNA nuclease (154 aa).

Belongs to the YqgF nuclease family.

Its subcellular location is the cytoplasm. Functionally, could be a nuclease involved in processing of the 5'-end of pre-16S rRNA. This Rickettsia felis (strain ATCC VR-1525 / URRWXCal2) (Rickettsia azadi) protein is Putative pre-16S rRNA nuclease.